The chain runs to 198 residues: Recombination protein RecR (198 aa).

The C4-type zinc-finger motif lies at 57–72; sequence CSICGRLTDDDPCSIC. Residues 80 to 175 enclose the Toprim domain; sequence TTILVLEDSR…KVTRLARGLA (96 aa).

It belongs to the RecR family.

In terms of biological role, may play a role in DNA repair. It seems to be involved in an RecBC-independent recombinational process of DNA repair. It may act with RecF and RecO. The sequence is that of Recombination protein RecR from Streptococcus pneumoniae (strain 70585).